Reading from the N-terminus, the 209-residue chain is Peptide deformylase 2 (209 aa).

The Fe cation site is built by cysteine 101 and histidine 149. The active site involves glutamate 150. A Fe cation-binding site is contributed by histidine 153.

It belongs to the polypeptide deformylase family. The cofactor is Fe(2+).

It catalyses the reaction N-terminal N-formyl-L-methionyl-[peptide] + H2O = N-terminal L-methionyl-[peptide] + formate. Functionally, removes the formyl group from the N-terminal Met of newly synthesized proteins. Requires at least a dipeptide for an efficient rate of reaction. N-terminal L-methionine is a prerequisite for activity but the enzyme has broad specificity at other positions. This chain is Peptide deformylase 2, found in Coxiella burnetii (strain RSA 493 / Nine Mile phase I).